Consider the following 446-residue polypeptide: tRNA-2-methylthio-N(6)-dimethylallyladenosine synthase (446 aa).

The region spanning Gln-3 to His-120 is the MTTase N-terminal domain. Positions 12, 49, 83, 157, 161, and 164 each coordinate [4Fe-4S] cluster. One can recognise a Radical SAM core domain in the interval Ser-143–Asp-375. Positions Arg-378 to Asp-442 constitute a TRAM domain.

The protein belongs to the methylthiotransferase family. MiaB subfamily. As to quaternary structure, monomer. [4Fe-4S] cluster is required as a cofactor.

It localises to the cytoplasm. It carries out the reaction N(6)-dimethylallyladenosine(37) in tRNA + (sulfur carrier)-SH + AH2 + 2 S-adenosyl-L-methionine = 2-methylsulfanyl-N(6)-dimethylallyladenosine(37) in tRNA + (sulfur carrier)-H + 5'-deoxyadenosine + L-methionine + A + S-adenosyl-L-homocysteine + 2 H(+). Its function is as follows. Catalyzes the methylthiolation of N6-(dimethylallyl)adenosine (i(6)A), leading to the formation of 2-methylthio-N6-(dimethylallyl)adenosine (ms(2)i(6)A) at position 37 in tRNAs that read codons beginning with uridine. This Hahella chejuensis (strain KCTC 2396) protein is tRNA-2-methylthio-N(6)-dimethylallyladenosine synthase.